A 605-amino-acid polypeptide reads, in one-letter code: Xylan O-acetyltransferase 7 (605 aa).

The Cytoplasmic segment spans residues 1–124; sequence MKKKKNGMGA…AKQPSPRRTP (124 aa). Residues 86 to 126 form a disordered region; the sequence is PCHLLPIQGQGQMQMQQRRKPPPAAAPVAAKQPSPRRTPGP. A helical; Signal-anchor for type II membrane protein transmembrane segment spans residues 125–145; that stretch reads GPLSFAGALLSLLVVATFLYI. Over 146 to 605 the chain is Lumenal; the sequence is NDHGNMMPPH…LYAHIVAHAA (460 aa). N-linked (GlcNAc...) asparagine glycosylation is found at Asn192 and Asn218. 4 disulfides stabilise this stretch: Cys243/Cys296, Cys267/Cys332, Cys276/Cys584, and Cys499/Cys580. A GDS motif motif is present at residues 319-321; it reads GDS. The Nucleophile role is filled by Ser321. N-linked (GlcNAc...) asparagine glycosylation is found at Asn351, Asn363, Asn471, and Asn508. Residue Asp579 is the Proton donor of the active site. Residues 579–582 carry the DXXH motif motif; that stretch reads DCIH. Catalysis depends on His582, which acts as the Proton acceptor.

Belongs to the PC-esterase family. TBL subfamily. In terms of tissue distribution, expressed in roots, leaves and stems.

It is found in the golgi apparatus membrane. Its function is as follows. Xylan acetyltransferase required for 2-O- and 3-O-monoacetylation of xylosyl residues in xylan. Catalyzes the 2-O-acetylation of xylan, followed by nonenzymatic acetyl migration to the O-3 position, resulting in products that are monoacetylated at both O-2 and O-3 positions. The sequence is that of Xylan O-acetyltransferase 7 from Oryza sativa subsp. japonica (Rice).